We begin with the raw amino-acid sequence, 270 residues long: Photosystem I chlorophyll a/b-binding protein 6, chloroplastic (270 aa).

The transit peptide at 1 to 33 directs the protein to the chloroplast; sequence MAFAIASALTSTLTLSTSRVQNPTQRRPHVAST. The disordered stretch occupies residues 16–36; the sequence is STSRVQNPTQRRPHVASTSST. Polar residues predominate over residues 19-36; the sequence is RVQNPTQRRPHVASTSST. A chlorophyll b-binding site is contributed by Trp68. The chlorophyll a site is built by Phe88 and Glu107. Arg112 is a chlorophyll b binding site. A helical membrane pass occupies residues 146-164; the sequence is YFADSTTLFVAQMVLMGWA. Residues Glu165 and Arg168 each contribute to the chlorophyll b site. 6 residues coordinate chlorophyll a: Lys221, Glu222, Asn225, Arg227, Gln239, and His254. Residues 228–244 traverse the membrane as a helical segment; sequence LAMLAFLGFCFQATYTS.

Belongs to the light-harvesting chlorophyll a/b-binding (LHC) protein family. In terms of assembly, the LHC complex consists of chlorophyll a-b binding proteins. Homodimer. Binds pigments. Element of the NAD(P)H dehydrogenase-photosystem I supercomplex (NDH-PSI). The cofactor is Binds at least 14 chlorophylls (8 Chl-a and 6 Chl-b) and carotenoids such as lutein and neoxanthin.. Photoregulated by reversible phosphorylation of its threonine residues.

The protein resides in the plastid. It is found in the chloroplast thylakoid membrane. Functionally, the light-harvesting complex (LHC) functions as a light receptor, it captures and delivers excitation energy to photosystems with which it is closely associated. Seems involved in the function of the photosystem I in low light conditions, when other LHCA proteins are less abundant. Required, together with LHCA5, for the formation of a full-size NAD(P)H dehydrogenase-photosystem I supercomplex (NDH-PSI) that triggers cyclic and chlororespiratory electron transport in chloroplast thylakoids, especially under stress conditions (e.g. increased light intensity). This Arabidopsis thaliana (Mouse-ear cress) protein is Photosystem I chlorophyll a/b-binding protein 6, chloroplastic.